The primary structure comprises 205 residues: Large ribosomal subunit protein uL4 (205 aa).

The disordered stretch occupies residues 44 to 79 (RAGTKAQKTRREVSGSGAKPWRQKGTGRARAGSSRS).

Belongs to the universal ribosomal protein uL4 family. Part of the 50S ribosomal subunit.

Its function is as follows. One of the primary rRNA binding proteins, this protein initially binds near the 5'-end of the 23S rRNA. It is important during the early stages of 50S assembly. It makes multiple contacts with different domains of the 23S rRNA in the assembled 50S subunit and ribosome. In terms of biological role, forms part of the polypeptide exit tunnel. This is Large ribosomal subunit protein uL4 from Coxiella burnetii (strain Dugway 5J108-111).